The chain runs to 351 residues: Anthranilate phosphoribosyltransferase (351 aa).

Residues G89, G92 to D93, T97, N99 to T102, K117 to G125, and S129 each bind 5-phospho-alpha-D-ribose 1-diphosphate. An anthranilate-binding site is contributed by G89. S101 provides a ligand contact to Mg(2+). N120 lines the anthranilate pocket. Residue R175 participates in anthranilate binding. Residues D234 and E235 each contribute to the Mg(2+) site.

Belongs to the anthranilate phosphoribosyltransferase family. In terms of assembly, homodimer. Mg(2+) is required as a cofactor.

The catalysed reaction is N-(5-phospho-beta-D-ribosyl)anthranilate + diphosphate = 5-phospho-alpha-D-ribose 1-diphosphate + anthranilate. It participates in amino-acid biosynthesis; L-tryptophan biosynthesis; L-tryptophan from chorismate: step 2/5. Functionally, catalyzes the transfer of the phosphoribosyl group of 5-phosphorylribose-1-pyrophosphate (PRPP) to anthranilate to yield N-(5'-phosphoribosyl)-anthranilate (PRA). This chain is Anthranilate phosphoribosyltransferase, found in Synechococcus sp. (strain CC9902).